Consider the following 347-residue polypeptide: Membrane progestin receptor gamma-B (347 aa).

Over 1-52 (MLSLIKLQRVFNVHQVPKAFHEDGIISGYRHPRSSATECVWSLFQLTNETLN) the chain is Cytoplasmic. A helical transmembrane segment spans residues 53-73 (VWTHFLPTWYFLWKLMTVLLM). Over 74 to 81 (EDVWNEAY) the chain is Extracellular. The chain crosses the membrane as a helical span at residues 82 to 102 (TWPLLVFLFSCCVYPLASSCA). The Cytoplasmic portion of the chain corresponds to 103–114 (HTFSSMSTRARH). A helical membrane pass occupies residues 115–135 (ICYFFDYGALSFYSLGSAISY). Over 136–138 (SAY) the chain is Extracellular. The chain crosses the membrane as a helical span at residues 139-159 (VFPDAWLSSSFHAYYISVAVF). Residues 160 to 201 (NTVLSTSLACYSRLGLPLLHYSHDIVERFSERQCPRMSKVLR) lie on the Cytoplasmic side of the membrane. A helical transmembrane segment spans residues 202 to 222 (ILAFAYPYLFDNIPLFYRLFV). Topologically, residues 223-235 (CVGEGCTDNEANS) are extracellular. The helical transmembrane segment at 236 to 256 (VHVQHTLLAFLTSFLFATHLP) threads the bilayer. The Cytoplasmic portion of the chain corresponds to 257–314 (ERLAPGRFDYIGHSHQLFHVCAIIGTHFQMKAIEMDMGLRRSQLLASAPAISFNNTIG). A helical membrane pass occupies residues 315-335 (AALLCVSVSLGIICVYSLPLL). At 336 to 347 (YSSNPKNTANKE) the chain is on the extracellular side.

The protein belongs to the ADIPOR family.

It is found in the membrane. Its function is as follows. Steroid membrane receptor. Binds progesterone. May be involved in oocyte maturation. In Danio rerio (Zebrafish), this protein is Membrane progestin receptor gamma-B.